A 132-amino-acid chain; its full sequence is Putative F-box protein At4g05620 (132 aa).

The F-box domain maps to 17-63 (QKKSLSLPHDVLVSCLAHVSRLHYSILSLVLKNFRSLIASPELYKTR).

This is Putative F-box protein At4g05620 from Arabidopsis thaliana (Mouse-ear cress).